Reading from the N-terminus, the 80-residue chain is Large ribosomal subunit protein uL24 (80 aa).

The tract at residues 53–80 (HMKPTQSHPQGSIIEREFPIHASNVKKS) is disordered.

Belongs to the universal ribosomal protein uL24 family. Part of the 50S ribosomal subunit.

Functionally, one of two assembly initiator proteins, it binds directly to the 5'-end of the 23S rRNA, where it nucleates assembly of the 50S subunit. In terms of biological role, one of the proteins that surrounds the polypeptide exit tunnel on the outside of the subunit. In Chlorobium limicola (strain DSM 245 / NBRC 103803 / 6330), this protein is Large ribosomal subunit protein uL24.